Here is a 180-residue protein sequence, read N- to C-terminus: tRNA (cytidine(56)-2'-O)-methyltransferase (180 aa).

Residues Leu85, Gly114–Val118, and Val132–Glu139 contribute to the S-adenosyl-L-methionine site.

It belongs to the aTrm56 family. In terms of assembly, homodimer.

The protein localises to the cytoplasm. It catalyses the reaction cytidine(56) in tRNA + S-adenosyl-L-methionine = 2'-O-methylcytidine(56) in tRNA + S-adenosyl-L-homocysteine + H(+). Its function is as follows. Specifically catalyzes the AdoMet-dependent 2'-O-ribose methylation of cytidine at position 56 in tRNAs. This is tRNA (cytidine(56)-2'-O)-methyltransferase from Thermococcus kodakarensis (strain ATCC BAA-918 / JCM 12380 / KOD1) (Pyrococcus kodakaraensis (strain KOD1)).